The sequence spans 293 residues: 4-diphosphocytidyl-2-C-methyl-D-erythritol kinase (293 aa).

Lys-16 is an active-site residue. An ATP-binding site is contributed by Pro-99–Ser-109. Residue Asp-141 is part of the active site.

Belongs to the GHMP kinase family. IspE subfamily.

It carries out the reaction 4-CDP-2-C-methyl-D-erythritol + ATP = 4-CDP-2-C-methyl-D-erythritol 2-phosphate + ADP + H(+). Its pathway is isoprenoid biosynthesis; isopentenyl diphosphate biosynthesis via DXP pathway; isopentenyl diphosphate from 1-deoxy-D-xylulose 5-phosphate: step 3/6. Catalyzes the phosphorylation of the position 2 hydroxy group of 4-diphosphocytidyl-2C-methyl-D-erythritol. This chain is 4-diphosphocytidyl-2-C-methyl-D-erythritol kinase, found in Burkholderia thailandensis (strain ATCC 700388 / DSM 13276 / CCUG 48851 / CIP 106301 / E264).